The sequence spans 266 residues: Small ribosomal subunit protein uS3 (266 aa).

One can recognise a KH type-2 domain in the interval 39-107 (VREYLKKKLK…PVHVNIEEIR (69 aa)). The tract at residues 218–266 (EVAEDKRPRRNARPGDRRPRRDGEGGAPGARRGAPRRGAGKPEDGKTGE) is disordered. 2 stretches are compositionally biased toward basic and acidic residues: residues 230–241 (RPGDRRPRRDGE) and 257–266 (GKPEDGKTGE).

Belongs to the universal ribosomal protein uS3 family. Part of the 30S ribosomal subunit. Forms a tight complex with proteins S10 and S14.

Its function is as follows. Binds the lower part of the 30S subunit head. Binds mRNA in the 70S ribosome, positioning it for translation. This chain is Small ribosomal subunit protein uS3, found in Burkholderia multivorans (strain ATCC 17616 / 249).